The chain runs to 143 residues: Deoxyuridine 5'-triphosphate nucleotidohydrolase (143 aa).

Substrate-binding positions include 62–64, asparagine 75, and 79–81; these read RSG and TID.

Belongs to the dUTPase family. Mg(2+) serves as cofactor.

It carries out the reaction dUTP + H2O = dUMP + diphosphate + H(+). The protein operates within pyrimidine metabolism; dUMP biosynthesis; dUMP from dCTP (dUTP route): step 2/2. Its function is as follows. This enzyme is involved in nucleotide metabolism: it produces dUMP, the immediate precursor of thymidine nucleotides and it decreases the intracellular concentration of dUTP so that uracil cannot be incorporated into DNA. The sequence is that of Deoxyuridine 5'-triphosphate nucleotidohydrolase from Acaryochloris marina (strain MBIC 11017).